Here is a 380-residue protein sequence, read N- to C-terminus: Proline iminopeptidase (380 aa).

In terms of domain architecture, AB hydrolase-1 spans 98–360 (PVVFLHGGPG…IVYDAGHSAN (263 aa)). Residue Ser172 is the Nucleophile of the active site. The active site involves Asp329. His357 functions as the Proton donor in the catalytic mechanism.

This sequence belongs to the peptidase S33 family.

The protein localises to the cytoplasm. It catalyses the reaction Release of N-terminal proline from a peptide.. Functionally, specifically catalyzes the removal of N-terminal proline residues from peptides. In Arabidopsis thaliana (Mouse-ear cress), this protein is Proline iminopeptidase (PIP).